The chain runs to 428 residues: METTRSEALFKEAAKFIPGGVNSPVRACGSVGGSPLFIQKAEGSKIIDADGNVYIDYVGSWGPMILGHRHPDVVKALIEALASGTSFGAPTALETRLSQLVVEAVPSVEKVRMVNSGTEATMSAVRLARGYTGRDIIIKFDGGYHGHADTLLVAAGSGVATLNIPGSPGIPESVSAHTLSITYNDGEAVKRVMAEKGDRVAAIIVEPVAGNMGMVPPVKGFHETLRTLCTKHGALLIFDEVMTGFRVAKGSGQGLFGITPDLTCFGKIIGGGLPVGAYGGRREIMDQIAPAGPVYQAGTLSGNPLAMAAGIATLEALKKTGFYESLDAKTERLVTGLRTAAEKAGIDFTASHVGSMAGMFFTRATVTNFDEAKTSDLVNFSKFYTGMRDRGIYLAPSQFEALFVSAAHTNDEIDATIAAAADVMAGLV.

Position 267 is an N6-(pyridoxal phosphate)lysine (K267).

The protein belongs to the class-III pyridoxal-phosphate-dependent aminotransferase family. HemL subfamily. As to quaternary structure, homodimer. It depends on pyridoxal 5'-phosphate as a cofactor.

The protein resides in the cytoplasm. The catalysed reaction is (S)-4-amino-5-oxopentanoate = 5-aminolevulinate. It participates in porphyrin-containing compound metabolism; protoporphyrin-IX biosynthesis; 5-aminolevulinate from L-glutamyl-tRNA(Glu): step 2/2. In Desulforapulum autotrophicum (strain ATCC 43914 / DSM 3382 / VKM B-1955 / HRM2) (Desulfobacterium autotrophicum), this protein is Glutamate-1-semialdehyde 2,1-aminomutase.